A 112-amino-acid polypeptide reads, in one-letter code: Thioredoxin (112 aa).

The 111-residue stretch at 2–112 (SEDSATVAVT…ALLRELSDAL (111 aa)) folds into the Thioredoxin domain. An intrachain disulfide couples cysteine 35 to cysteine 38.

Belongs to the thioredoxin family.

Functionally, participates in various redox reactions through the reversible oxidation of its active center dithiol to a disulfide and catalyzes dithiol-disulfide exchange reactions. This Mycolicibacterium smegmatis (Mycobacterium smegmatis) protein is Thioredoxin (trxA).